Reading from the N-terminus, the 415-residue chain is Dynein assembly factor with WD repeat domains 1 (415 aa).

WD repeat units follow at residues 90–129 (AHILPLTNVAFNKSGSCFITGSYDRTCKIWDTASGEELHT), 132–172 (GHRN…CFYT), 175–214 (GHTAEIVCLAFNPQSTLVATGSMDTTAKLWDVESGEEVST), 217–256 (GHFAEIISLCFNTTGDRLVTGSFDHTAILWDVPSGRKVHV), 259–298 (GHRGEISCVQFNWDCSLIATASLDKSCKVWDAEGGQCLAT), 301–340 (GHNDEVLDVCFNYTGQLIATASADGTSRVFSTDTFQCLCQ), 343–384 (GHKG…QVLE), and 385–415 (GHSDEIFSCAFNYEGDTIITGSKDNTCRIWH).

The protein belongs to the WD repeat WDR69 family. In terms of tissue distribution, expressed in organs bearing motile cilia, including the pronephros, otic vesicles and Kupffer's vesicle.

It localises to the cytoplasm. It is found in the cytoskeleton. The protein resides in the flagellum basal body. Its subcellular location is the flagellum axoneme. Required for axonemal dynein assembly and ciliary motility in ciliated organs, including Kupffer's vesicle, during embryogenesis. Facilitates the onset of robust cilia motility during development. In Danio rerio (Zebrafish), this protein is Dynein assembly factor with WD repeat domains 1 (daw1).